The chain runs to 513 residues: Palmitoyltransferase ZDHHC14 (513 aa).

At 1 to 59 the chain is on the cytoplasmic side; sequence MHLGVEEPIRECQYNQICTHNSSPMDTPHIKKKKNKRKWQVFPGRNRFYCNGRIMMAKQ. A helical transmembrane segment spans residues 60-80; the sequence is TGVFYLTMVLILVTSGLFFAF. The Lumenal segment spans residues 81 to 88; sequence DCPFLASN. The helical transmembrane segment at 89 to 109 threads the bilayer; the sequence is LTPAIPAIGGVLFVFVMGMLL. Residues 110–207 lie on the Cytoplasmic side of the membrane; it reads RASFSDPGVL…GNCVGRRNYR (98 aa). The DHHC domain maps to 164 to 214; that stretch reads KYCFTCKIFRPPRASHCSLCDNCVDRFDHHCPWVGNCVGRRNYRFFYLFIL. The active-site S-palmitoyl cysteine intermediate is the Cys194. Residues 208-228 form a helical membrane-spanning segment; it reads FFYLFILSLSFLTIFIFAFVI. The Lumenal portion of the chain corresponds to 229–266; sequence THVILNALRKALALSTAADFEAVQKDPTGLAFLVLSKT. The chain crosses the membrane as a helical span at residues 267-287; the sequence is ALLDILEVVVCFFSVWSIVGL. Residues 288-513 are Cytoplasmic-facing; sequence SGFHTYLISS…VRGLVKLSSV (226 aa). The segment at 348–369 is disordered; it reads FIQPDTPQPATQTNGTSACPPN. Over residues 355 to 369 the composition is skewed to polar residues; sequence QPATQTNGTSACPPN.

This sequence belongs to the DHHC palmitoyltransferase family. ERF2/ZDHHC9 subfamily.

The protein localises to the endoplasmic reticulum membrane. Its subcellular location is the golgi apparatus membrane. It catalyses the reaction L-cysteinyl-[protein] + hexadecanoyl-CoA = S-hexadecanoyl-L-cysteinyl-[protein] + CoA. Its function is as follows. Palmitoyltransferase that could catalyze the addition of palmitate onto various protein substrates. The polypeptide is Palmitoyltransferase ZDHHC14 (zdhhc14) (Danio rerio (Zebrafish)).